We begin with the raw amino-acid sequence, 355 residues long: Phospho-N-acetylmuramoyl-pentapeptide-transferase (355 aa).

The next 10 membrane-spanning stretches (helical) occupy residues 14-34, 40-60, 84-104, 107-127, 147-167, 176-196, 205-225, 227-247, 268-290, and 334-354; these read PTGTHLLILLTGLLFLLVVFF, LLIPLMATTLISAGLGCQVVP, GTPTMGGSFFVPVALIFALIW, FTPNVVAVALLTFVYMGIGWL, LILQITGAVLFCLWMLVNQVS, LVIPLGFFFWILAGFVLVAES, VDGLAGGTGAIAFLGLGIIIA, SHPDLAIFCTCFAGACLGFIF, ALAAVGLIAGHLWGLFLISGLFF, and TKIVGAFYLVNALLVVLAIWS.

This sequence belongs to the glycosyltransferase 4 family. MraY subfamily. Mg(2+) is required as a cofactor.

The protein resides in the cell inner membrane. It catalyses the reaction UDP-N-acetyl-alpha-D-muramoyl-L-alanyl-gamma-D-glutamyl-meso-2,6-diaminopimeloyl-D-alanyl-D-alanine + di-trans,octa-cis-undecaprenyl phosphate = di-trans,octa-cis-undecaprenyl diphospho-N-acetyl-alpha-D-muramoyl-L-alanyl-D-glutamyl-meso-2,6-diaminopimeloyl-D-alanyl-D-alanine + UMP. It participates in cell wall biogenesis; peptidoglycan biosynthesis. Catalyzes the initial step of the lipid cycle reactions in the biosynthesis of the cell wall peptidoglycan: transfers peptidoglycan precursor phospho-MurNAc-pentapeptide from UDP-MurNAc-pentapeptide onto the lipid carrier undecaprenyl phosphate, yielding undecaprenyl-pyrophosphoryl-MurNAc-pentapeptide, known as lipid I. In Microcystis aeruginosa (strain NIES-843 / IAM M-2473), this protein is Phospho-N-acetylmuramoyl-pentapeptide-transferase.